The sequence spans 285 residues: Probable endonuclease 4 (285 aa).

Zn(2+)-binding residues include H69, H109, E145, D179, H182, H216, D229, H231, and E261.

It belongs to the AP endonuclease 2 family. The cofactor is Zn(2+).

The catalysed reaction is Endonucleolytic cleavage to 5'-phosphooligonucleotide end-products.. Endonuclease IV plays a role in DNA repair. It cleaves phosphodiester bonds at apurinic or apyrimidinic (AP) sites, generating a 3'-hydroxyl group and a 5'-terminal sugar phosphate. This is Probable endonuclease 4 from Salmonella agona (strain SL483).